Reading from the N-terminus, the 255-residue chain is ATP synthase subunit a 2 (255 aa).

5 helical membrane-spanning segments follow: residues W24–L44, L86–L106, D131–F151, M205–W225, and A226–V246.

It belongs to the ATPase A chain family. As to quaternary structure, F-type ATPases have 2 components, CF(1) - the catalytic core - and CF(0) - the membrane proton channel. CF(1) has five subunits: alpha(3), beta(3), gamma(1), delta(1), epsilon(1). CF(0) has three main subunits: a(1), b(2) and c(9-12). The alpha and beta chains form an alternating ring which encloses part of the gamma chain. CF(1) is attached to CF(0) by a central stalk formed by the gamma and epsilon chains, while a peripheral stalk is formed by the delta and b chains.

The protein resides in the cell inner membrane. Functionally, key component of the proton channel; it plays a direct role in the translocation of protons across the membrane. This Vibrio campbellii (strain ATCC BAA-1116) protein is ATP synthase subunit a 2.